We begin with the raw amino-acid sequence, 40 residues long: Ribosome-inactivating protein saporin-1 (40 aa).

Belongs to the ribosome-inactivating protein family. Type 1 RIP subfamily.

The enzyme catalyses Endohydrolysis of the N-glycosidic bond at one specific adenosine on the 28S rRNA.. Functionally, ribosome-inactivating protein of type 1, inhibits protein synthesis in animal cells. The protein is Ribosome-inactivating protein saporin-1 (SAP1) of Saponaria officinalis (Common soapwort).